Consider the following 319-residue polypeptide: Putative olfactory receptor 52L2 (319 aa).

Topologically, residues 1-43 are extracellular; it reads MNLDSFFSFLLKSLIMALSNSSWRLPQPSFFLVGIPGLEESQH. Residue N20 is glycosylated (N-linked (GlcNAc...) asparagine). The chain crosses the membrane as a helical span at residues 44 to 64; the sequence is WIALPLGILYLLALVGNVTIL. The Cytoplasmic portion of the chain corresponds to 65 to 72; sequence FIIWMDPS. The helical transmembrane segment at 73-93 threads the bilayer; the sequence is LHQSMYLFLSMLAAIDLVVAS. The Extracellular segment spans residues 94-117; it reads STAPKALAVLLVRAQEIGYTVCLI. The cysteines at positions 115 and 207 are disulfide-linked. A helical transmembrane segment spans residues 118-138; it reads QMFFTHAFSSMESGVLVAMAL. Over 139-157 the chain is Cytoplasmic; the sequence is DRYVAICHPLHHSTILHPG. Residues 158-178 traverse the membrane as a helical segment; it reads VIGHIGMVVLVRGLLLLIPFL. The Extracellular segment spans residues 179-214; that stretch reads ILLRKLIFCQATIIGHAYCEHMAVVKLACSETTVNR. Residues 215–235 traverse the membrane as a helical segment; that stretch reads AYGLTVALLVVGLDVLAIGVS. At 236-255 the chain is on the cytoplasmic side; sequence YAHILQAVLKVPGNEARLKA. The chain crosses the membrane as a helical span at residues 256–276; the sequence is FSTCGSHVCVILVFYIPGMFS. Residues 277–291 are Extracellular-facing; that stretch reads FLTHRFGHHVPHHVH. The chain crosses the membrane as a helical span at residues 292–312; that stretch reads VLLAILYRLVPPALNPLVYRV. Topologically, residues 313-319 are cytoplasmic; the sequence is KTQKIHQ.

Belongs to the G-protein coupled receptor 1 family.

It localises to the cell membrane. Functionally, odorant receptor. The protein is Putative olfactory receptor 52L2 (OR52L2P) of Homo sapiens (Human).